Reading from the N-terminus, the 277-residue chain is Radial spoke head protein 9 homolog (277 aa).

Belongs to the flagellar radial spoke RSP9 family. Component of axonemal radial spoke complexes.

Its subcellular location is the cytoplasm. The protein localises to the cytoskeleton. The protein resides in the cilium axoneme. It is found in the flagellum axoneme. It localises to the cell projection. Its subcellular location is the kinocilium. In terms of biological role, functions as part of axonemal radial spoke complexes that play an important part in the motility of sperm and cilia. Essential for both the radial spoke head assembly and the central pair microtubule stability in ependymal motile cilia. Required for motility of olfactory and neural cilia and for the structural integrity of ciliary axonemes in both 9+0 and 9+2 motile cilia. This chain is Radial spoke head protein 9 homolog (rsph9), found in Xenopus tropicalis (Western clawed frog).